Consider the following 590-residue polypeptide: Methionine--tRNA ligase, mitochondrial (590 aa).

The N-terminal 26 residues, 1-26 (MRTRFLFLTSGCKAVPELHKIVLANA), are a transit peptide targeting the mitochondrion. A 'HIGH' region motif is present at residues 51-61 (FYVNASPHLGH). The 'KMSKS' region signature appears at 342 to 346 (KMSKS). Residue lysine 345 participates in ATP binding. Residues 570 to 590 (LESQRADQQKNRKMEKGSNLK) are disordered. A compositionally biased stretch (basic and acidic residues) spans 571-590 (ESQRADQQKNRKMEKGSNLK).

The protein belongs to the class-I aminoacyl-tRNA synthetase family.

It localises to the mitochondrion matrix. It catalyses the reaction tRNA(Met) + L-methionine + ATP = L-methionyl-tRNA(Met) + AMP + diphosphate. The sequence is that of Methionine--tRNA ligase, mitochondrial (mars2) from Takifugu rubripes (Japanese pufferfish).